The primary structure comprises 273 residues: Cell division protein FtsQ (273 aa).

At 1-20 (MPPRKAHTTRRTPAKKSGVR) the chain is on the cytoplasmic side. The chain crosses the membrane as a helical span at residues 21 to 43 (RRLLRLLVTGVPVLALCGVAWLW). Residues 44-273 (LESVRLTRIE…STQKSAMGHE (230 aa)) lie on the Periplasmic side of the membrane. In terms of domain architecture, POTRA spans 47-115 (VRLTRIEIVG…GTLRIAVEER (69 aa)).

This sequence belongs to the FtsQ/DivIB family. FtsQ subfamily.

Its subcellular location is the cell inner membrane. In terms of biological role, essential cell division protein. The polypeptide is Cell division protein FtsQ (Rhodothermus marinus (strain ATCC 43812 / DSM 4252 / R-10) (Rhodothermus obamensis)).